Reading from the N-terminus, the 165-residue chain is MSTAQAVKIGIAEMEVVIAPNVIRTCGLGSCVGVVIYDAGKAVAGMAHVMLPHSSMARGGVINAAKYADTAVEALVQLVIAAGGRKGMLKAKLAGGAQMFSFSTVGGDMMRIGARNVEEVKKQLERLHIPVVAEDVGGHSGRTIEFNPQTGVLSIRTAAQEIKEI.

This sequence belongs to the CheD family.

It catalyses the reaction L-glutaminyl-[protein] + H2O = L-glutamyl-[protein] + NH4(+). In terms of biological role, probably deamidates glutamine residues to glutamate on methyl-accepting chemotaxis receptors (MCPs), playing an important role in chemotaxis. This is Probable chemoreceptor glutamine deamidase CheD from Geobacillus kaustophilus (strain HTA426).